We begin with the raw amino-acid sequence, 380 residues long: Erythronate-4-phosphate dehydrogenase (380 aa).

Positions 45 and 66 each coordinate substrate. NAD(+) contacts are provided by residues 126 to 127, Asp146, Thr174, 205 to 207, and Asp231; these read QV and ASR. Arg207 is a catalytic residue. Residue Glu236 is part of the active site. His253 acts as the Proton donor in catalysis. An NAD(+)-binding site is contributed by Gly256. Position 257 (Tyr257) interacts with substrate.

It belongs to the D-isomer specific 2-hydroxyacid dehydrogenase family. PdxB subfamily. Homodimer.

It is found in the cytoplasm. It carries out the reaction 4-phospho-D-erythronate + NAD(+) = (R)-3-hydroxy-2-oxo-4-phosphooxybutanoate + NADH + H(+). Its pathway is cofactor biosynthesis; pyridoxine 5'-phosphate biosynthesis; pyridoxine 5'-phosphate from D-erythrose 4-phosphate: step 2/5. Catalyzes the oxidation of erythronate-4-phosphate to 3-hydroxy-2-oxo-4-phosphonooxybutanoate. This Pseudomonas savastanoi pv. phaseolicola (strain 1448A / Race 6) (Pseudomonas syringae pv. phaseolicola (strain 1448A / Race 6)) protein is Erythronate-4-phosphate dehydrogenase.